We begin with the raw amino-acid sequence, 478 residues long: NADH-quinone oxidoreductase subunit N (478 aa).

14 helical membrane-spanning segments follow: residues 5–25 (LASP…VGVA), 37–57 (MLTL…ALGL), 68–88 (FAVM…VLSL), 99–119 (FEFP…VSAS), 121–141 (FMTL…LAAF), 156–176 (FVLG…IYGF), 199–219 (LTVG…AAPF), 231–251 (PTPV…AMML), 268–288 (VVAL…IGQT), 293–313 (LMAY…AAGS), 320–340 (LLIY…CILA), 365–385 (ALLL…SGFF), 401–421 (LLWG…YYYL), and 446–466 (VVAV…APIL).

It belongs to the complex I subunit 2 family. As to quaternary structure, NDH-1 is composed of 14 different subunits. Subunits NuoA, H, J, K, L, M, N constitute the membrane sector of the complex.

It localises to the cell inner membrane. The enzyme catalyses a quinone + NADH + 5 H(+)(in) = a quinol + NAD(+) + 4 H(+)(out). Its function is as follows. NDH-1 shuttles electrons from NADH, via FMN and iron-sulfur (Fe-S) centers, to quinones in the respiratory chain. The immediate electron acceptor for the enzyme in this species is believed to be ubiquinone. Couples the redox reaction to proton translocation (for every two electrons transferred, four hydrogen ions are translocated across the cytoplasmic membrane), and thus conserves the redox energy in a proton gradient. The chain is NADH-quinone oxidoreductase subunit N from Granulibacter bethesdensis (strain ATCC BAA-1260 / CGDNIH1).